The primary structure comprises 448 residues: Exodeoxyribonuclease 7 large subunit (448 aa).

The protein belongs to the XseA family. In terms of assembly, heterooligomer composed of large and small subunits.

Its subcellular location is the cytoplasm. The enzyme catalyses Exonucleolytic cleavage in either 5'- to 3'- or 3'- to 5'-direction to yield nucleoside 5'-phosphates.. Bidirectionally degrades single-stranded DNA into large acid-insoluble oligonucleotides, which are then degraded further into small acid-soluble oligonucleotides. This Enterococcus faecalis (strain ATCC 700802 / V583) protein is Exodeoxyribonuclease 7 large subunit.